Here is a 218-residue protein sequence, read N- to C-terminus: MAQTAMSETYDFLFKFLVIGNAGTGKSCLLHQFIEKKFKDDSNHTIGVEFGSKIINVGGKYVKLQIWDTAGQERFRSVTRSYYRGAAGALLVYDITSRETYNALTNWLTDARMLASQNIVLILCGNKKDLDADREVTFLEASRFAQENELMFLETSALTGENVEEAFMQCARKILNKIESGELDPERMGSGIQYGDAALRQLRSPRRTQAPSAQECGC.

Residues glycine 23, threonine 24, glycine 25, lysine 26, serine 27, cysteine 28, serine 42, histidine 44, and threonine 45 each coordinate GTP. Mg(2+) is bound at residue serine 27. The Switch 1 motif lies at 44–49 (HTIGVE). Mg(2+) contacts are provided by threonine 45 and aspartate 68. The short motif at 70 to 79 (AGQERFRSVT) is the Switch 2 element. Residue glycine 71 participates in GTP binding. Glutamine 72 carries the post-translational modification 5-glutamyl serotonin. GTP-binding residues include asparagine 126, lysine 127, aspartate 129, alanine 157, and leucine 158. At serine 190 the chain carries Phosphoserine. A Phosphoserine; by CDK1 modification is found at serine 204. S-geranylgeranyl cysteine attachment occurs at residues cysteine 216 and cysteine 218. At cysteine 218 the chain carries Cysteine methyl ester.

The protein belongs to the small GTPase superfamily. Rab family. As to quaternary structure, interacts with SGSM1, SGSM2 and SGSM3. Interacts with RAB11FIP1, RABEP1, ZFYVE20 and RUFY1. Interacts (membrane-bound form) with NDRG1; the interaction involves NDRG1 in vesicular recycling of E-cadherin. Interacts (in GTP-bound form) with GRIPAP1 (via N-terminus). Interacts with RABEP1 and RBSN. Does not interact with HPS4. Does not interact with HPS4. Interacts with RABEP2; this interaction may mediate VEGFR2 cell surface expression. The cofactor is Mg(2+). Serotonylation of Gln-72 by TGM2 during activation and aggregation of platelets leads to constitutive activation of GTPase activity. In terms of processing, phosphorylated by CDK1 kinase during mitosis. In terms of tissue distribution, expressed in the central nervous system, including cortex, cerebellum, midbrain and spinal cord, and in the kidney, lung, liver and spleen.

The protein resides in the membrane. The protein localises to the cytoplasm. It localises to the early endosome membrane. Its subcellular location is the recycling endosome membrane. It carries out the reaction GTP + H2O = GDP + phosphate + H(+). Its activity is regulated as follows. Regulated by guanine nucleotide exchange factors (GEFs) which promote the exchange of bound GDP for free GTP. Regulated by GTPase activating proteins (GAPs) which increase the GTP hydrolysis activity. Inhibited by GDP dissociation inhibitors (GDIs). Its function is as follows. The small GTPases Rab are key regulators of intracellular membrane trafficking, from the formation of transport vesicles to their fusion with membranes. Rabs cycle between an inactive GDP-bound form and an active GTP-bound form that is able to recruit to membranes different sets of downstream effectors directly responsible for vesicle formation, movement, tethering and fusion. RAB4A is involved in protein transport. Also plays a role in vesicular traffic. Mediates VEGFR2 endosomal trafficking to enhance VEGFR2 signaling. Acts as a regulator of platelet alpha-granule release during activation and aggregation of platelets. The sequence is that of Ras-related protein Rab-4A from Mus musculus (Mouse).